The following is a 639-amino-acid chain: Mediator of RNA polymerase II transcription subunit 17 (639 aa).

Residues 160 to 187 adopt a coiled-coil conformation; it reads RLQNFNAAADKLLKSASRLENEVASETR.

Belongs to the Mediator complex subunit 17 family. In terms of assembly, component of the Mediator complex.

Its subcellular location is the nucleus. In terms of biological role, component of the Mediator complex, a coactivator involved in the regulated transcription of nearly all RNA polymerase II-dependent genes. Mediator functions as a bridge to convey information from gene-specific regulatory proteins to the basal RNA polymerase II transcription machinery. Mediator is recruited to promoters by direct interactions with regulatory proteins and serves as a scaffold for the assembly of a functional preinitiation complex with RNA polymerase II and the general transcription factors. This chain is Mediator of RNA polymerase II transcription subunit 17 (srb4), found in Neosartorya fischeri (strain ATCC 1020 / DSM 3700 / CBS 544.65 / FGSC A1164 / JCM 1740 / NRRL 181 / WB 181) (Aspergillus fischerianus).